The chain runs to 302 residues: Elongation factor Ts (302 aa).

The segment at 80-83 (TDFV) is involved in Mg(2+) ion dislocation from EF-Tu.

Belongs to the EF-Ts family.

It localises to the cytoplasm. Associates with the EF-Tu.GDP complex and induces the exchange of GDP to GTP. It remains bound to the aminoacyl-tRNA.EF-Tu.GTP complex up to the GTP hydrolysis stage on the ribosome. The chain is Elongation factor Ts from Gluconobacter oxydans (strain 621H) (Gluconobacter suboxydans).